The sequence spans 279 residues: Phosphate import ATP-binding protein PstB 2 (279 aa).

The 241-residue stretch at 34 to 274 folds into the ABC transporter domain; the sequence is FDIENLDLYY…PSDDRTRGYV (241 aa). 66-73 contributes to the ATP binding site; that stretch reads GPSGCGKS.

Belongs to the ABC transporter superfamily. Phosphate importer (TC 3.A.1.7) family. The complex is composed of two ATP-binding proteins (PstB), two transmembrane proteins (PstC and PstA) and a solute-binding protein (PstS).

The protein resides in the cell inner membrane. It carries out the reaction phosphate(out) + ATP + H2O = ADP + 2 phosphate(in) + H(+). Functionally, part of the ABC transporter complex PstSACB involved in phosphate import. Responsible for energy coupling to the transport system. The chain is Phosphate import ATP-binding protein PstB 2 from Vibrio vulnificus (strain YJ016).